The following is a 347-amino-acid chain: NADH-ubiquinone oxidoreductase chain 2 (347 aa).

10 helical membrane-spanning segments follow: residues 13–33, 59–79, 96–116, 122–142, 144–164, 178–200, 210–232, 246–266, 276–296, and 326–346; these read IVLGTMIVMTSSHWLMIWMGF, YFLTQATASMLLMLAIIINLV, IIMTVALAMKMGLAPFHFWVP, ISLLSGLILLTWQKLAPLSVL, VISPIINLDLLLTMSILSILI, ILAYSSIAHMGWMTSILIFNPMM, LMTATTFTLFMTTSTTTTLALSH, IIMLSLGGLPPLVGFLPKWMI, IILATLMAITALLNLFFYMRL, and LPMLIVLSTMTLPLAPAMILL.

It belongs to the complex I subunit 2 family. In terms of assembly, core subunit of respiratory chain NADH dehydrogenase (Complex I) which is composed of 45 different subunits. Interacts with TMEM242.

It is found in the mitochondrion inner membrane. The enzyme catalyses a ubiquinone + NADH + 5 H(+)(in) = a ubiquinol + NAD(+) + 4 H(+)(out). Functionally, core subunit of the mitochondrial membrane respiratory chain NADH dehydrogenase (Complex I) which catalyzes electron transfer from NADH through the respiratory chain, using ubiquinone as an electron acceptor. Essential for the catalytic activity and assembly of complex I. The polypeptide is NADH-ubiquinone oxidoreductase chain 2 (Rhynchonycteris naso (Brazilian long-nosed bat)).